The following is a 397-amino-acid chain: Subtilisin-like serine protease Pen c 1 (397 aa).

The signal sequence occupies residues 1–19 (MGFLKVLATSLATLAVVDA). Positions 20–115 (GTLLTASNTD…IEPDMIVNAT (96 aa)) are cleaved as a propeptide — removed in mature form. The Inhibitor I9 domain occupies 35–113 (SYIVVMNDDV…KYIEPDMIVN (79 aa)). The 273-residue stretch at 125-397 (SWGLARISSK…SKLLYNGINV (273 aa)) folds into the Peptidase S8 domain. Active-site charge relay system residues include Asp-157, His-188, and Ser-343.

Belongs to the peptidase S8 family.

The protein resides in the secreted. With respect to regulation, inhibited by 0.1 mM diisopropyl fluorophosphate (DFP), phenylmethanesulfonyl fluoride (PMSF), chymostatin and elastatinal. Not inhibited by N-alpha-p-tosyl-L-lysine chloromethylketone (TLCK), N-tosyl-L-phenylalanyl chloromethyl ketone (TPCK) or N-carbobenzoxy-L-phenylalanine chloromethylketone (ZPCK). In terms of biological role, serine protease. Hydrolyzes azocasein. Cleaves peptide bonds of the oxidized insulin B chain preferably at 15-Leu-|-Tyr-16, but also at 4-Gln-|-His-5 and 24-Phe-|-Phe-25, and to a lesser extent at 5-His-|-Leu-6 and 25-Phe-|-Tyr-26. Hydrolyzes amide bonds between amino acids and 7-amino-4-methylcoumarin (AMC) in vitro. The chain is Subtilisin-like serine protease Pen c 1 from Penicillium citrinum.